We begin with the raw amino-acid sequence, 955 residues long: Protein translocase subunit SecA (955 aa).

Residues Gln87, Gly105–Thr109, and Asp494 contribute to the ATP site. Residues Ala861 to Arg955 are disordered. Over residues Gln874–Ala888 the composition is skewed to low complexity. Over residues Ser943–Arg955 the composition is skewed to basic residues.

It belongs to the SecA family. Monomer and homodimer. Part of the essential Sec protein translocation apparatus which comprises SecA, SecYEG and auxiliary proteins SecDF. Other proteins may also be involved.

It localises to the cell membrane. The protein resides in the cytoplasm. The enzyme catalyses ATP + H2O + cellular proteinSide 1 = ADP + phosphate + cellular proteinSide 2.. In terms of biological role, part of the Sec protein translocase complex. Interacts with the SecYEG preprotein conducting channel. Has a central role in coupling the hydrolysis of ATP to the transfer of proteins into and across the cell membrane, serving as an ATP-driven molecular motor driving the stepwise translocation of polypeptide chains across the membrane. This Rhodococcus jostii (strain RHA1) protein is Protein translocase subunit SecA.